A 71-amino-acid chain; its full sequence is Cell division protein FtsB (71 aa).

Residues Met-1–Ile-3 lie on the Cytoplasmic side of the membrane. The chain crosses the membrane as a helical span at residues Leu-4–Phe-21. The Extracellular portion of the chain corresponds to Gly-22–Thr-71.

It belongs to the FtsB family.

Its subcellular location is the cell membrane. Its function is as follows. Essential cell division protein. May link together the upstream cell division proteins, which are predominantly cytoplasmic, with the downstream cell division proteins, which are predominantly extracellular. This is Cell division protein FtsB from Buchnera aphidicola subsp. Acyrthosiphon pisum (strain APS) (Acyrthosiphon pisum symbiotic bacterium).